A 371-amino-acid polypeptide reads, in one-letter code: Putative RNA-binding protein Luc7-like 1 (371 aa).

Coiled-coil stretches lie at residues 87-177 and 220-256; these read MDHL…RNSM and QIREKLDQLRKTVAEKQEKRNQDRLRRREEREREERL. Residues 232-257 show a composition bias toward basic and acidic residues; it reads VAEKQEKRNQDRLRRREEREREERLG. A disordered region spans residues 232-371; that stretch reads VAEKQEKRNQ…RSEEKEAGEI (140 aa). The span at 258–317 shows a compositional bias: basic residues; the sequence is RRSGSRTRDRRRSRSRDRRRRRSRSTSRERRKFSRSRSRDRYRRHRSRSRSHSRGHRRAS. Basic and acidic residues-rich tracts occupy residues 318 to 351 and 361 to 371; these read RDRSTKYKFSRERSLREESWEYGRNERGPTDWRL and RRSEEKEAGEI. A phosphoserine mark is found at Ser-336 and Ser-363.

It belongs to the Luc7 family.

In terms of biological role, may bind to RNA via its Arg/Ser-rich domain. The polypeptide is Putative RNA-binding protein Luc7-like 1 (Luc7l) (Mus musculus (Mouse)).